A 600-amino-acid polypeptide reads, in one-letter code: Glutamine--fructose-6-phosphate aminotransferase [isomerizing] (600 aa).

The active-site Nucleophile; for GATase activity is the Cys-2. The Glutamine amidotransferase type-2 domain maps to 2–217; the sequence is CGIVGFIGEQ…DKEIVIVMKE (216 aa). SIS domains follow at residues 283–422 and 452–590; these read IRNA…AKGE and LAKQ…VDKP. Catalysis depends on Lys-595, which acts as the For Fru-6P isomerization activity.

As to quaternary structure, homodimer.

The protein resides in the cytoplasm. It carries out the reaction D-fructose 6-phosphate + L-glutamine = D-glucosamine 6-phosphate + L-glutamate. Catalyzes the first step in hexosamine metabolism, converting fructose-6P into glucosamine-6P using glutamine as a nitrogen source. This Bacillus anthracis protein is Glutamine--fructose-6-phosphate aminotransferase [isomerizing].